Here is a 120-residue protein sequence, read N- to C-terminus: Small ribosomal subunit protein eS24 (120 aa).

The segment at 101–120 (RDAGTKQKKGGSKGGQGAKG) is disordered.

This sequence belongs to the eukaryotic ribosomal protein eS24 family.

The chain is Small ribosomal subunit protein eS24 from Saccharolobus islandicus (strain M.16.27) (Sulfolobus islandicus).